Here is a 520-residue protein sequence, read N- to C-terminus: uncharacterized protein (520 aa).

A run of 9 helical transmembrane segments spans residues 38 to 58 (VVLIILSFLISFLLIISIPGG), 84 to 104 (IAIYILAGLAFSFCMSVGIFN), 105 to 125 (IGISGQMMAGAIFGFLMILKV), 138 to 158 (IITVLLMVIGSVSVAVVVATL), 167 to 187 (VVSAIMLNWIVVLISAYLVET), 220 to 240 (FGWLASLIIAFISVIIVAVVL), 271 to 291 (FLSFIISGILSGLLATVVYTA), 318 to 338 (IAIGLIALNNPFRIVIVSVLI), and 355 to 375 (ASLVLGIMMYFAALYNLMVYF).

It localises to the cell membrane. This is an uncharacterized protein from Mycoplasma genitalium (strain ATCC 33530 / DSM 19775 / NCTC 10195 / G37) (Mycoplasmoides genitalium).